The primary structure comprises 380 residues: Maintenance of mitochondrial morphology protein 1 (380 aa).

Topologically, residues 1–64 (MQGRAIWAEG…IVPSLSFIQG (64 aa)) are lumenal. Residues 65–85 (FMAGQAVLLMLFLGLFRYFFM) traverse the membrane as a helical segment. The Cytoplasmic segment spans residues 86-380 (TSSPGTRAQQ…IGTSPADPLA (295 aa)). Positions 147-369 (APESLDWLNV…WPHFWHIPLP (223 aa)) constitute an SMP-LTD domain.

The protein belongs to the MMM1 family. Homodimer. Component of the ER-mitochondria encounter structure (ERMES) or MDM complex, composed of MMM1, MDM10, MDM12 and MDM34. An MMM1 homodimer associates with one molecule of MDM12 on each side in a pairwise head-to-tail manner, and the SMP-LTD domains of MMM1 and MDM12 generate a continuous hydrophobic tunnel for phospholipid trafficking.

It is found in the endoplasmic reticulum membrane. Functionally, component of the ERMES/MDM complex, which serves as a molecular tether to connect the endoplasmic reticulum (ER) and mitochondria. Components of this complex are involved in the control of mitochondrial shape and protein biogenesis, and function in nonvesicular lipid trafficking between the ER and mitochondria. The MDM12-MMM1 subcomplex functions in the major beta-barrel assembly pathway that is responsible for biogenesis of all outer membrane beta-barrel proteins, and acts in a late step after the SAM complex. The MDM10-MDM12-MMM1 subcomplex further acts in the TOM40-specific pathway after the action of the MDM12-MMM1 complex. Essential for establishing and maintaining the structure of mitochondria and maintenance of mtDNA nucleoids. This Malassezia globosa (strain ATCC MYA-4612 / CBS 7966) (Dandruff-associated fungus) protein is Maintenance of mitochondrial morphology protein 1.